A 1020-amino-acid chain; its full sequence is DNA-directed RNA polymerase 2, chloroplastic/mitochondrial (1020 aa).

Residues 314–336 (KKQKAEKDKQKEDGEHVTQEQEK) are disordered. Residues Asp721, Lys796, and Asp953 contribute to the active site.

This sequence belongs to the phage and mitochondrial RNA polymerase family. In terms of tissue distribution, the highest levels of expression are detected in the mature leaves. The level of expression is lowest in the cotyledons.

The protein localises to the plastid. It localises to the chloroplast. Its subcellular location is the mitochondrion. The catalysed reaction is RNA(n) + a ribonucleoside 5'-triphosphate = RNA(n+1) + diphosphate. DNA-dependent RNA polymerase catalyzes the transcription of DNA into RNA using the four ribonucleoside triphosphates as substrates. This Nicotiana sylvestris (Wood tobacco) protein is DNA-directed RNA polymerase 2, chloroplastic/mitochondrial (RPOT2).